The following is a 63-amino-acid chain: MNHPTSTGGTAFNPPRPATMIYLCADCGARNTIQAKEVIRCRECGHRVMYKMRTKRMVQFEAR.

Positions 24, 27, 41, and 44 each coordinate Zn(2+). A C4-type zinc finger spans residues 24–44 (CADCGARNTIQAKEVIRCREC).

The protein belongs to the archaeal Rpo12/eukaryotic RPC10 RNA polymerase subunit family. As to quaternary structure, component of the RNA polymerase I (Pol I), RNA polymerase II (Pol II) and RNA polymerase III (Pol III) complexes consisting of 14, 12 and 17 subunits, respectively.

It localises to the nucleus. DNA-dependent RNA polymerase catalyzes the transcription of DNA into RNA using the four ribonucleoside triphosphates as substrates. Common component of RNA polymerases I, II and III which synthesize ribosomal RNA precursors, mRNA precursors and many functional non-coding RNAs, and a small RNAs, such as 5S rRNA and tRNAs, respectively. This is DNA-directed RNA polymerases I, II, and III subunit RPABC4 (rpc10) from Schizosaccharomyces pombe (strain 972 / ATCC 24843) (Fission yeast).